The primary structure comprises 180 residues: Protein GrpE (180 aa).

The interval 1–21 is disordered; it reads MSEEVKEQNLPEVEPVQEAAS.

This sequence belongs to the GrpE family. As to quaternary structure, homodimer.

The protein localises to the cytoplasm. Participates actively in the response to hyperosmotic and heat shock by preventing the aggregation of stress-denatured proteins, in association with DnaK and GrpE. It is the nucleotide exchange factor for DnaK and may function as a thermosensor. Unfolded proteins bind initially to DnaJ; upon interaction with the DnaJ-bound protein, DnaK hydrolyzes its bound ATP, resulting in the formation of a stable complex. GrpE releases ADP from DnaK; ATP binding to DnaK triggers the release of the substrate protein, thus completing the reaction cycle. Several rounds of ATP-dependent interactions between DnaJ, DnaK and GrpE are required for fully efficient folding. The chain is Protein GrpE from Campylobacter concisus (strain 13826).